We begin with the raw amino-acid sequence, 462 residues long: Lipase A (462 aa).

A signal peptide spans 1–21; sequence MRVSLRSITSLLAAATAAVLA. Cysteine 122 and cysteine 294 are oxidised to a cystine. Residues serine 205, aspartate 355, and histidine 387 each act as charge relay system in the active site. Cysteine 371 and cysteine 415 are disulfide-bonded.

This sequence belongs to the AB hydrolase superfamily. Lipase family. Monomer.

It is found in the secreted. The enzyme catalyses a triacylglycerol + H2O = a diacylglycerol + a fatty acid + H(+). Functionally, hydrolyzes triglycerides, with a preference for substrates with short-chain lengths (C4 to C8). Has the highest activity with tributyrin (C4), followed by tricaproin (C6) and tricaprylin (C8). Can also hydrolyze vinylacetate (C2) and triolein (C18), but with lower efficiency. Has no activity with tripalmitin (C16). The chain is Lipase A from Moesziomyces aphidis (Pseudozyma aphidis).